Consider the following 351-residue polypeptide: UDP-3-O-acylglucosamine N-acyltransferase (351 aa).

The Proton acceptor role is filled by histidine 240.

It belongs to the transferase hexapeptide repeat family. LpxD subfamily. As to quaternary structure, homotrimer.

It catalyses the reaction a UDP-3-O-[(3R)-3-hydroxyacyl]-alpha-D-glucosamine + a (3R)-hydroxyacyl-[ACP] = a UDP-2-N,3-O-bis[(3R)-3-hydroxyacyl]-alpha-D-glucosamine + holo-[ACP] + H(+). It participates in bacterial outer membrane biogenesis; LPS lipid A biosynthesis. Its function is as follows. Catalyzes the N-acylation of UDP-3-O-acylglucosamine using 3-hydroxyacyl-ACP as the acyl donor. Is involved in the biosynthesis of lipid A, a phosphorylated glycolipid that anchors the lipopolysaccharide to the outer membrane of the cell. The sequence is that of UDP-3-O-acylglucosamine N-acyltransferase from Pseudomonas putida (strain ATCC 47054 / DSM 6125 / CFBP 8728 / NCIMB 11950 / KT2440).